A 729-amino-acid polypeptide reads, in one-letter code: Phosphoribosylformylglycinamidine synthase subunit PurL (729 aa).

Histidine 54 is an active-site residue. ATP is bound by residues tyrosine 57 and lysine 96. Glutamate 98 is a binding site for Mg(2+). Substrate is bound by residues 99 to 102 (SHNH) and arginine 121. Histidine 100 (proton acceptor) is an active-site residue. Aspartate 122 serves as a coordination point for Mg(2+). A substrate-binding site is contributed by glutamine 245. Aspartate 273 contributes to the Mg(2+) binding site. Position 317-319 (317-319 (ETQ)) interacts with substrate. ATP-binding residues include aspartate 495 and glycine 532. Asparagine 533 is a binding site for Mg(2+). Serine 535 is a substrate binding site.

Belongs to the FGAMS family. As to quaternary structure, monomer. Part of the FGAM synthase complex composed of 1 PurL, 1 PurQ and 2 PurS subunits.

It localises to the cytoplasm. The enzyme catalyses N(2)-formyl-N(1)-(5-phospho-beta-D-ribosyl)glycinamide + L-glutamine + ATP + H2O = 2-formamido-N(1)-(5-O-phospho-beta-D-ribosyl)acetamidine + L-glutamate + ADP + phosphate + H(+). It functions in the pathway purine metabolism; IMP biosynthesis via de novo pathway; 5-amino-1-(5-phospho-D-ribosyl)imidazole from N(2)-formyl-N(1)-(5-phospho-D-ribosyl)glycinamide: step 1/2. Part of the phosphoribosylformylglycinamidine synthase complex involved in the purines biosynthetic pathway. Catalyzes the ATP-dependent conversion of formylglycinamide ribonucleotide (FGAR) and glutamine to yield formylglycinamidine ribonucleotide (FGAM) and glutamate. The FGAM synthase complex is composed of three subunits. PurQ produces an ammonia molecule by converting glutamine to glutamate. PurL transfers the ammonia molecule to FGAR to form FGAM in an ATP-dependent manner. PurS interacts with PurQ and PurL and is thought to assist in the transfer of the ammonia molecule from PurQ to PurL. The polypeptide is Phosphoribosylformylglycinamidine synthase subunit PurL (Staphylococcus haemolyticus (strain JCSC1435)).